The primary structure comprises 254 residues: MSWKRHHLIPETFGVKRRRKRGPVESDPLRGEPGSARAAVSELMQLFPRGLFEDALPPIVLRSQVYSLVPDRTVADRQLKELQEQGEIRIVQLGFDLDAHGIIFTEDYRTRVLKACDGRPYAGAVQKFLASVLPACGDLSFQQDQMTQTFGFRDSEITHLVNAGVLTVRDAGSWWLAVPGAGRFIKYFVKGRQAVLSMVRKAKYRELLLSELLGRRAPVVVRLGLTYHVHDLIGAQLVDCISTTSGTLLRLPET.

The Bipartite nuclear localization signal signature appears at 4–21 (KRHHLIPETFGVKRRRKR). 3 winged helix domain regions span residues 32–104 (EPGS…GIIF), 120–179 (PYAG…LAVP), and 180–254 (GAGR…LPET).

Belongs to the STK19 family. Monomer in solution. Homodimer; when bound to DNA. Component of a transcription-coupled nucleotide excision repair (TC-NER) complex composed of STK19, ERCC6, ERCC8, DDA1, DDB1, ELOF1 and UVSSA which assembles and interacts with the multiprotein RNA polymerase II complex when it stalls at DNA lesions. In terms of tissue distribution, monocytes, hepatocytes, epithelial cells, T- and B-lymphocytes.

The protein resides in the nucleus. Its subcellular location is the cytoplasm. Its function is as follows. DNA-binding protein which is required for efficient transcription-coupled nucleotide excision repair (TC-NER). Acts as part of a TC-NER complex which assembles and interacts with RNA polymerase II (RNAPII) when it stalls at DNA lesions. TC-NER complex subunit UVSSA binds to the GTF2H1/p62 subunit of the TFIIH transcription factor complex, tethering TFIIH to the TC-NER complex. WHR1/STK19 then interacts with the XPD helicase subunit of TFIIH which guides TFIIH to DNA downstream of the stalled RNAPII, ensuring DNA repair. Directly interacts with RNAPII and also binds to downstream DNA. Promotes the timely removal of DNA damage-stalled RNAPII, allowing downstream NER factors to access DNA lesions. Required for monoubiquitination of UVSSA. Regulates repositioning and stabilization of UVSSA within the TC-NER complex. Stimulates ubiquitination of RNAPII complex member RBP1. Also binds to RNA and regulates the expression levels of many mRNAs. This is Winged helix repair factor 1 from Homo sapiens (Human).